Here is a 47-residue protein sequence, read N- to C-terminus: Fasciclin-like arabinogalactan protein (47 aa).

The 47-residue stretch at 1–47 (APTPATLNGLTIFAPNDEAFKATGVPDLSKLSNAPMVSLLQYHAAAR) folds into the FAS1 domain.

It belongs to the fasciclin-like AGP family.

Functionally, may be a cell surface adhesion protein. This chain is Fasciclin-like arabinogalactan protein, found in Jatropha curcas (Barbados nut).